The primary structure comprises 319 residues: Ribonucleoside-diphosphate reductase small chain (319 aa).

Residues 313 to 319 (FSLDVDF) form an interaction with R1 region.

It belongs to the ribonucleoside diphosphate reductase small chain family. As to quaternary structure, interacts with RNR1/OPG080 subunit. Can interact with host RNR1 supunit. Fe cation serves as cofactor.

The catalysed reaction is a 2'-deoxyribonucleoside 5'-diphosphate + [thioredoxin]-disulfide + H2O = a ribonucleoside 5'-diphosphate + [thioredoxin]-dithiol. Its function is as follows. Ribonucleoside-diphosphate reductase holoenzyme provides the precursors necessary for viral DNA synthesis. Allows virus growth in non-dividing cells. Catalyzes the biosynthesis of deoxyribonucleotides from the corresponding ribonucleotides. This chain is Ribonucleoside-diphosphate reductase small chain (OPG048), found in Cynomys gunnisoni (Gunnison's prairie dog).